The following is a 531-amino-acid chain: 5-(hydroxymethyl)furfural oxidase (531 aa).

FAD-binding positions include 15–16, 36–37, Trp-68, Leu-94, Gly-98, 102–105, Val-233, and Trp-466; these read TA, EA, and NMVV. Catalysis depends on His-467, which acts as the Proton acceptor. Residues Ala-501 and 512 to 513 each bind FAD; that span reads TN.

This sequence belongs to the GMC oxidoreductase family. As to quaternary structure, monomer. It depends on FAD as a cofactor.

It catalyses the reaction 5-hydroxymethylfurfural + 3 O2 + 2 H2O = 2,5-dicarboxyfuran + 3 H2O2 + 2 H(+). The enzyme catalyses benzylthiol + O2 = benzothialdehyde + H2O2. Functionally, involved in the degradation and detoxification of 5-(hydroxymethyl)furfural (HMF) by mediating its oxidation to furan-2,5-dicarboxylate (FDCA), a biobased platform chemical for the production of polymers. Active with a wide range of aromatic and aliphatic primary alcohols and aldehydes: acts on alcohol groups and requires the spontaneous hydration of aldehyde groups for their oxidation. To a lesser extent, is also able to catalyze the oxidation of thiols that are structurally similar to its alcohol substrates, yielding the corresponding thiocarbonyls. This chain is 5-(hydroxymethyl)furfural oxidase, found in Methylovorus sp. (strain MP688).